The sequence spans 990 residues: Chondroitin sulfate ABC exolyase (990 aa).

His-453 acts as the Proton acceptor in catalysis. Tyr-460 (proton donor) is an active-site residue.

The protein belongs to the polysaccharide lyase 8 family.

The catalysed reaction is Exolytic removal of Delta(4)-unsaturated disaccharide residues from the non-reducing ends of both polymeric chondroitin/dermatan sulfates and their oligosaccharide fragments.. Its activity is regulated as follows. Inhibited by Zn(2+), whereas Ni(2+), Fe(2+), and Cu(2+) have little or no effect on activity. Its function is as follows. Broad-specificity glycosaminoglycan lyase, which acts in an exolytic fashion, and preferentially degrades the tetra- and hexasaccharide derivatives of chondroitin sulfate and dermatan sulfate produced by the chondroitin sulfate ABC endolyase, to yield the respective disaccharides. To a lesser extent, is also able to split off disaccharide residues directly from polymeric chondroitin 4- and 6-sulfate, dermatan sulfate, chondroitin, and hyaluronan. Is not active against keratan sulfate, heparan sulfate, and heparin. This Proteus vulgaris protein is Chondroitin sulfate ABC exolyase (ChABCII).